Consider the following 298-residue polypeptide: Thymidylate synthase (298 aa).

Residues arginine 25 and 159 to 160 (RR) contribute to the dUMP site. Cysteine 179 acts as the Nucleophile in catalysis. DUMP-binding positions include 200-203 (RSCD), asparagine 211, and 241-243 (HLY). Aspartate 203 provides a ligand contact to (6R)-5,10-methylene-5,6,7,8-tetrahydrofolate. Residue alanine 297 coordinates (6R)-5,10-methylene-5,6,7,8-tetrahydrofolate.

The protein belongs to the thymidylate synthase family. Bacterial-type ThyA subfamily. As to quaternary structure, homodimer.

It localises to the cytoplasm. It catalyses the reaction dUMP + (6R)-5,10-methylene-5,6,7,8-tetrahydrofolate = 7,8-dihydrofolate + dTMP. The protein operates within pyrimidine metabolism; dTTP biosynthesis. Functionally, catalyzes the reductive methylation of 2'-deoxyuridine-5'-monophosphate (dUMP) to 2'-deoxythymidine-5'-monophosphate (dTMP) while utilizing 5,10-methylenetetrahydrofolate (mTHF) as the methyl donor and reductant in the reaction, yielding dihydrofolate (DHF) as a by-product. This enzymatic reaction provides an intracellular de novo source of dTMP, an essential precursor for DNA biosynthesis. The sequence is that of Thymidylate synthase from Rhodopseudomonas palustris (strain BisA53).